The following is a 101-amino-acid chain: Urease subunit beta (101 aa).

This sequence belongs to the urease beta subunit family. Heterotrimer of UreA (gamma), UreB (beta) and UreC (alpha) subunits. Three heterotrimers associate to form the active enzyme.

It is found in the cytoplasm. It carries out the reaction urea + 2 H2O + H(+) = hydrogencarbonate + 2 NH4(+). It functions in the pathway nitrogen metabolism; urea degradation; CO(2) and NH(3) from urea (urease route): step 1/1. The polypeptide is Urease subunit beta (Saccharophagus degradans (strain 2-40 / ATCC 43961 / DSM 17024)).